The primary structure comprises 558 residues: Urocanate hydratase (558 aa).

NAD(+)-binding positions include 54 to 55, Q132, 178 to 180, E198, 244 to 245, 265 to 269, 275 to 276, and Y324; these read GG, GMG, NA, QTSAH, and YL. The active site involves C412. An NAD(+)-binding site is contributed by G494.

This sequence belongs to the urocanase family. NAD(+) is required as a cofactor.

It is found in the cytoplasm. It carries out the reaction 4-imidazolone-5-propanoate = trans-urocanate + H2O. It participates in amino-acid degradation; L-histidine degradation into L-glutamate; N-formimidoyl-L-glutamate from L-histidine: step 2/3. In terms of biological role, catalyzes the conversion of urocanate to 4-imidazolone-5-propionate. This Acinetobacter baumannii (strain SDF) protein is Urocanate hydratase.